The primary structure comprises 87 residues: Cytochrome c6 (87 aa).

Positions 10, 13, 14, and 56 each coordinate heme c.

The protein belongs to the cytochrome c family. PetJ subfamily. As to quaternary structure, monomer. In terms of processing, binds 1 heme c group covalently per subunit.

It is found in the plastid. Its subcellular location is the chloroplast thylakoid lumen. Functions as an electron carrier between membrane-bound cytochrome b6-f and photosystem I in oxygenic photosynthesis. This is Cytochrome c6 (petJ) from Euglena viridis (Cercaria viridis).